The sequence spans 256 residues: MLENKIIFVAGACGRIGKALCKKILQNKGIAILADINENHLSILKTELENEFKKELLSLRLDITSKESLNCAIDQAFEKYSKIDGFVNSSYPVGKDWGKIAYYEASYEQICESLNLHLGGFILASQEFVKFFKKQSYGNIINLSSIMGVFAPKFENYENTTMQSSLEYSVIKAGINHLGAWLAKELFNTNIRVNTLASGGILDNQANIFLEKYRKCCASKGMLDAEDICGTLVFLLSDESKFVTGQTLVVDDGWGL.

Substrate is bound at residue S145. Residue Y168 is the Proton acceptor of the active site.

It belongs to the short-chain dehydrogenases/reductases (SDR) family.

Its function is as follows. Required for biosynthesis of LAH modification in the post-translational modification of Campylobacter coli flagellin. The protein is Post-translational flagellin modification protein A (ptmA) of Campylobacter coli.